A 224-amino-acid polypeptide reads, in one-letter code: Flagellar L-ring protein (224 aa).

The N-terminal stretch at 1 to 15 (MIKYIALASVVLLVG) is a signal peptide. Residue Cys-16 is the site of N-palmitoyl cysteine attachment. A lipid anchor (S-diacylglycerol cysteine) is attached at Cys-16.

The protein belongs to the FlgH family. As to quaternary structure, the basal body constitutes a major portion of the flagellar organelle and consists of four rings (L,P,S, and M) mounted on a central rod.

The protein localises to the cell outer membrane. The protein resides in the bacterial flagellum basal body. Functionally, assembles around the rod to form the L-ring and probably protects the motor/basal body from shearing forces during rotation. The polypeptide is Flagellar L-ring protein (Shewanella frigidimarina (strain NCIMB 400)).